A 273-amino-acid chain; its full sequence is 2-dehydro-3-deoxyphosphooctonate aldolase (273 aa).

It belongs to the KdsA family.

The protein localises to the cytoplasm. The enzyme catalyses D-arabinose 5-phosphate + phosphoenolpyruvate + H2O = 3-deoxy-alpha-D-manno-2-octulosonate-8-phosphate + phosphate. The protein operates within carbohydrate biosynthesis; 3-deoxy-D-manno-octulosonate biosynthesis; 3-deoxy-D-manno-octulosonate from D-ribulose 5-phosphate: step 2/3. It functions in the pathway bacterial outer membrane biogenesis; lipopolysaccharide biosynthesis. This Geobacter sp. (strain M21) protein is 2-dehydro-3-deoxyphosphooctonate aldolase.